The chain runs to 359 residues: Centromere-binding protein 1 (359 aa).

The interval 1-262 (MSGKRSYQDD…SHKEVERRRR (262 aa)) is disordered. Over residues 55 to 78 (KENKENRDGDKVGDDEHDVVKGES) the composition is skewed to basic and acidic residues. The span at 120–161 (GDEDEDEDEEEEEDEDDHVDIDDVDKDPDAVIDEDDDEEDED) shows a compositional bias: acidic residues. Positions 249 to 259 (QRKESHKEVER) are enriched in basic and acidic residues. The bHLH domain occupies 249 to 297 (QRKESHKEVERRRRQNINTAIEKLSDLLPVKETSKAAILSRAAEYIQKM).

As to quaternary structure, binds DNA as a dimer.

Its subcellular location is the nucleus. It is found in the chromosome. It localises to the centromere. Its function is as follows. Required for chromosome stability and methionine prototrophy. It is involved in chromosomal segregation. Binds to a highly conserved DNA sequence (5'-RTCACRTG-3'), called CDEI, found in centromeres and in several promoters. The polypeptide is Centromere-binding protein 1 (CBF1) (Kluyveromyces lactis (strain ATCC 8585 / CBS 2359 / DSM 70799 / NBRC 1267 / NRRL Y-1140 / WM37) (Yeast)).